The chain runs to 24 residues: Waglerin-3 (24 aa).

The segment covering 1-10 (SLGGKPDLRP) has biased composition (basic and acidic residues). A disordered region spans residues 1–24 (SLGGKPDLRPCHPPCHYIPRPKPR). A disulfide bond links Cys-11 and Cys-15.

The protein belongs to the waglerin family. Waglerin-1 is monomeric. In terms of processing, amidation of the waglerin-1 C-terminus increases the affinity by 2-fold. In terms of tissue distribution, expressed by the venom gland.

The protein localises to the secreted. In terms of biological role, waglerin-1 selectively blocks the epsilon subunit of muscle nicotinic acetylcholine receptor (nAChR). Also has effects on rodent ionotropic GABA(A) receptors (GABR), since it potentiates I(GABA) in some neurons and depresses I(GABA) in others. In mice, it elicits tachypnea, ocular proptosis, rapid collapse and spasms, whereas no toxic effects on respiration and blood pressure are observed in rats. Its function is as follows. Waglerin-3 selectively blocks the epsilon subunit of muscle nicotinic acetylcholine receptor (nAChR). It elicits tachypnea, ocular proptosis, rapid collapse and spasms in mice. It causes death by respiratory failure. This is Waglerin-3 from Tropidolaemus wagleri (Wagler's pit viper).